The chain runs to 513 residues: Cytochrome P450 monooxygenase orf3 (513 aa).

A helical transmembrane segment spans residues 11 to 31; the sequence is LVALGLIAATIIIYSFTLTVY. Asn-211 and Asn-351 each carry an N-linked (GlcNAc...) asparagine glycan. Cys-455 contributes to the heme binding site.

Belongs to the cytochrome P450 family. Requires heme as cofactor.

It is found in the membrane. The protein operates within mycotoxin biosynthesis. Cytochrome P450 monooxygenase; part of the gene cluster that mediates the biosynthesis of brefeldin A (BFA), a protein transport inhibitor that shows antiviral, antifungal, and antitumor properties. The proposed biosynthesis of BFA involves formation of an acyclic polyketide chain that is differentially tailored throughout the backbone. The highly reducing polyketide synthase Bref-PKS is proposed to synthesize the precisely reduced octaketide precursor, which could then be directly offloaded by the thiohydrolase enzyme Bref-TH followed by a cytochrome P450 monooxygenase-mediated formation of the cyclopentane ring and macrocyclization to afford 7-deoxy BFA. Alternatively, the first ring annulation can also occur on the ACP-tethered intermediate before the thiohydrolase release and lactonization. The C7-hydroxylation by another cytochrome P450 monooxygenase is believed to be the final step in the process to obtain the final structure of BFA. In addition to the HRPKS Bref-PKS and the thiohydrolase Bref-TH, the brefeldin A biosynthesis cluster contains 4 cytochrome p450 monooxygenases (called orf3 to orf6), as well a the probable cluster-specific transcription regulator orf8. The protein is Cytochrome P450 monooxygenase orf3 of Eupenicillium brefeldianum (Penicillium brefeldianum).